A 287-amino-acid chain; its full sequence is Protease HtpX (287 aa).

2 helical membrane-spanning segments follow: residues 4–24 (IFLL…VMSI) and 33–53 (GGLL…SLAI). His-139 lines the Zn(2+) pocket. Glu-140 is a catalytic residue. His-143 lines the Zn(2+) pocket. 2 consecutive transmembrane segments (helical) span residues 154–174 (LIQG…AGII) and 195–215 (AVVF…VAYF). Glu-220 lines the Zn(2+) pocket.

This sequence belongs to the peptidase M48B family. It depends on Zn(2+) as a cofactor.

Its subcellular location is the cell inner membrane. This Shewanella oneidensis (strain ATCC 700550 / JCM 31522 / CIP 106686 / LMG 19005 / NCIMB 14063 / MR-1) protein is Protease HtpX.